Reading from the N-terminus, the 1450-residue chain is Arf-GAP with Rho-GAP domain, ANK repeat and PH domain-containing protein 1 (1450 aa).

The region spanning 6-70 is the SAM domain; it reads DAALSVAEWL…LAGLLRAHTS (65 aa). The required for interaction with SH3KBP1 stretch occupies residues 81–90; it reads PVPMKRHIFR. Disordered regions lie at residues 89–144 and 173–302; these read FRSP…LPPL and TKEE…SSLS. Residues 92–102 show a composition bias toward pro residues; the sequence is PPVPATPPEPL. The segment covering 190-199 has biased composition (low complexity); it reads QSEEPLSTLP. Residues 200–219 show a composition bias toward pro residues; it reads QGPPQPPSPPPCPPEIPPKP. Composition is skewed to acidic residues over residues 225–236 and 269–286; these read EFDDSDYDEVPE and EGEE…EDDH. S229 is subject to Phosphoserine. Phosphotyrosine; by PTK6 is present on Y231. One can recognise a PH 1 domain in the interval 327–419; sequence PVIKAGWLDK…WMQALQQAMA (93 aa). T354 is subject to Phosphothreonine. A Phosphoserine modification is found at S428. 2 positions are modified to phosphotyrosine: Y431 and Y504. The PH 2 domain maps to 440-529; sequence QPDRAGSLEL…WLEAMQGAIA (90 aa). Positions 535 to 660 constitute an Arf-GAP domain; that stretch reads SEVAERIWAA…RYHPLFGNQE (126 aa). Residues 550-576 form a C4-type zinc finger; it reads CADCGAPQPDWASINLCVVICKRCAGE. Position 738 is a phosphoserine (S738). In terms of domain architecture, PH 3 spans 743 to 850; it reads TVSHSGFLYK…WVKCIAKAFV (108 aa). In terms of domain architecture, Rho-GAP spans 954-1139; the sequence is ASMGDTLSEQ…DLINHYVVVF (186 aa). One can recognise a Ras-associating domain in the interval 1172–1261; it reads GDFICTVYLE…SHLVVKKHQA (90 aa). Positions 1274-1396 constitute a PH 4 domain; sequence GDTKHGMMKF…WFATFLFVQH (123 aa). Phosphoserine is present on residues S1428 and S1435.

Interacts with SH3KBP1/CIN85 (via SH3 domains). The interaction is independent of EGF and does not affect ARAP1 GTPase-activating activity but is involved in regulating ubiquitination and endocytic trafficking of EGFR. ARAP1 competes with E3 ubiquitin-protein ligase CBL for binding to SH3KBP1, preventing interaction of CBL with SH3KBP1; this is likely to regulate SH3KBP1-mediated internalization of EGFR. Interacts with TNFRSF10A. Phosphorylated by PTK6 following EGF stimulation which enhances EGFR signaling by delaying EGFR down-regulation; the interaction is mediated by the SH2 domain of PTK6. Phosphorylation promotes association with the Golgi apparatus and endosomes. In terms of tissue distribution, detected in heart, skeletal muscle, spleen, kidney, liver, placenta, lung, peripheral blood leukocytes, adrenal gland, bone marrow, brain, lymph node, mammary gland, prostate, spinal cord, stomach, thyroid and trachea.

The protein resides in the cytoplasm. Its subcellular location is the golgi apparatus. It is found in the trans-Golgi network. The protein localises to the golgi stack. It localises to the cell membrane. The protein resides in the endosome. Its subcellular location is the multivesicular body. It is found in the cell projection. The protein localises to the ruffle. It localises to the podosome. The protein resides in the early endosome. Phosphatidylinositol 3,4,5-trisphosphate-dependent GTPase-activating protein that modulates actin cytoskeleton remodeling by regulating ARF and RHO family members. Activated by phosphatidylinositol 3,4,5-trisphosphate (PtdIns(3,4,5)P3) binding and, to a lesser extent, by phosphatidylinositol 3,4-bisphosphate (PtdIns(3,4)P2) binding. Has a preference for ARF1 and ARF5. Positively regulates the ring size of circular dorsal ruffles and promotes macropinocytosis. Acts as a bridging factor in osteoclasts to control actin and membrane dynamics. Regulates the condensing of osteoclast podosomes into sealing zones which segregate the bone-facing membrane from other membrane domains and are required for osteoclast resorption activity. Also regulates recruitment of the AP-3 complex to endosomal membranes and trafficking of lysosomal membrane proteins to the ruffled membrane border of osteoclasts to modulate bone resorption. Regulates the endocytic trafficking of EGFR. Regulates the incorporation of CD63 and CD9 into multivesicular bodies. Required in the retinal pigment epithelium (RPE) for photoreceptor survival due to its role in promoting RPE phagocytosis. The chain is Arf-GAP with Rho-GAP domain, ANK repeat and PH domain-containing protein 1 (ARAP1) from Homo sapiens (Human).